Here is a 126-residue protein sequence, read N- to C-terminus: Large ribosomal subunit protein bL17 (126 aa).

The protein belongs to the bacterial ribosomal protein bL17 family. As to quaternary structure, part of the 50S ribosomal subunit. Contacts protein L32.

The polypeptide is Large ribosomal subunit protein bL17 (Vibrio parahaemolyticus serotype O3:K6 (strain RIMD 2210633)).